Consider the following 306-residue polypeptide: Pantothenate synthetase (306 aa).

Position 37–44 (37–44 (MGALHEGH)) interacts with ATP. Residue H44 is the Proton donor of the active site. Residue Q69 participates in (R)-pantoate binding. Q69 is a binding site for beta-alanine. 155–158 (GEKD) contacts ATP. Position 161 (Q161) interacts with (R)-pantoate. Residues V184 and 192 to 195 (KSSR) contribute to the ATP site.

This sequence belongs to the pantothenate synthetase family. In terms of assembly, homodimer.

The protein resides in the cytoplasm. It catalyses the reaction (R)-pantoate + beta-alanine + ATP = (R)-pantothenate + AMP + diphosphate + H(+). Its pathway is cofactor biosynthesis; (R)-pantothenate biosynthesis; (R)-pantothenate from (R)-pantoate and beta-alanine: step 1/1. Catalyzes the condensation of pantoate with beta-alanine in an ATP-dependent reaction via a pantoyl-adenylate intermediate. This Corynebacterium jeikeium (strain K411) protein is Pantothenate synthetase.